A 596-amino-acid polypeptide reads, in one-letter code: Aspartate--tRNA(Asp/Asn) ligase (596 aa).

Glu175 provides a ligand contact to L-aspartate. The interval 199–202 (QQYK) is aspartate. L-aspartate-binding residues include Arg221 and His454. 221 to 223 (RDE) contributes to the ATP binding site. Residue Glu488 participates in ATP binding. Arg495 provides a ligand contact to L-aspartate. 540 to 543 (GIDR) contacts ATP.

Belongs to the class-II aminoacyl-tRNA synthetase family. Type 1 subfamily. As to quaternary structure, homodimer.

It is found in the cytoplasm. The catalysed reaction is tRNA(Asx) + L-aspartate + ATP = L-aspartyl-tRNA(Asx) + AMP + diphosphate. Aspartyl-tRNA synthetase with relaxed tRNA specificity since it is able to aspartylate not only its cognate tRNA(Asp) but also tRNA(Asn). Reaction proceeds in two steps: L-aspartate is first activated by ATP to form Asp-AMP and then transferred to the acceptor end of tRNA(Asp/Asn). This chain is Aspartate--tRNA(Asp/Asn) ligase, found in Rhizobium rhizogenes (strain K84 / ATCC BAA-868) (Agrobacterium radiobacter).